Consider the following 172-residue polypeptide: Shikimate kinase (172 aa).

11-16 (GSGKTT) serves as a coordination point for ATP. Residue Thr-15 participates in Mg(2+) binding. Asp-33, Arg-57, and Gly-79 together coordinate substrate. An ATP-binding site is contributed by Arg-117. Position 136 (Arg-136) interacts with substrate.

The protein belongs to the shikimate kinase family. Monomer. Requires Mg(2+) as cofactor.

The protein resides in the cytoplasm. It carries out the reaction shikimate + ATP = 3-phosphoshikimate + ADP + H(+). The protein operates within metabolic intermediate biosynthesis; chorismate biosynthesis; chorismate from D-erythrose 4-phosphate and phosphoenolpyruvate: step 5/7. In terms of biological role, catalyzes the specific phosphorylation of the 3-hydroxyl group of shikimic acid using ATP as a cosubstrate. In Caldicellulosiruptor bescii (strain ATCC BAA-1888 / DSM 6725 / KCTC 15123 / Z-1320) (Anaerocellum thermophilum), this protein is Shikimate kinase.